Here is a 308-residue protein sequence, read N- to C-terminus: tRNA pseudouridine synthase B (308 aa).

The active-site Nucleophile is the D47.

It belongs to the pseudouridine synthase TruB family. Type 1 subfamily.

It carries out the reaction uridine(55) in tRNA = pseudouridine(55) in tRNA. Functionally, responsible for synthesis of pseudouridine from uracil-55 in the psi GC loop of transfer RNAs. This chain is tRNA pseudouridine synthase B, found in Xanthomonas oryzae pv. oryzae (strain MAFF 311018).